Consider the following 210-residue polypeptide: MNQPIGNIYIVVAPSGAGKTSLVAALLQAEPSVELSISYSTRQARKGEIDGQHYHFIDRAAFEEMKDRGDFLEWAEVYGNCYGTSAPWIRGRLEAGRDILLEIDWQGAEQVRKVFPDAIGIFIAPPSIEELERRLRGRDTDTEEVILRRLASARAEIDKIAEYDYIVVNDDFERARLDLISIVRAQRLRSAPQCRRLADMFRRMGTAGAK.

A Guanylate kinase-like domain is found at 6-184 (GNIYIVVAPS…ARLDLISIVR (179 aa)). 13 to 20 (APSGAGKT) contacts ATP.

It belongs to the guanylate kinase family.

It is found in the cytoplasm. It catalyses the reaction GMP + ATP = GDP + ADP. Its function is as follows. Essential for recycling GMP and indirectly, cGMP. This is Guanylate kinase from Chromobacterium violaceum (strain ATCC 12472 / DSM 30191 / JCM 1249 / CCUG 213 / NBRC 12614 / NCIMB 9131 / NCTC 9757 / MK).